We begin with the raw amino-acid sequence, 215 residues long: Cytochrome b6 (215 aa).

Residues 32-52 (IFYCFGGITLTCFLIQVATGF) form a helical membrane-spanning segment. Residue Cys35 participates in heme c binding. Residues His86 and His100 each coordinate heme b. The next 3 helical transmembrane spans lie at 90–110 (ASMMVMMLILHVFRVYLTGGF), 116–136 (LTWVTGVILAVITVSFGVTGY), and 186–206 (LHTFVLPLLTAVFMLMHFLMI). The heme b site is built by His187 and His202.

The protein belongs to the cytochrome b family. PetB subfamily. In terms of assembly, the 4 large subunits of the cytochrome b6-f complex are cytochrome b6, subunit IV (17 kDa polypeptide, PetD), cytochrome f and the Rieske protein, while the 4 small subunits are PetG, PetL, PetM and PetN. The complex functions as a dimer. It depends on heme b as a cofactor. Requires heme c as cofactor.

The protein resides in the plastid. Its subcellular location is the chloroplast thylakoid membrane. Component of the cytochrome b6-f complex, which mediates electron transfer between photosystem II (PSII) and photosystem I (PSI), cyclic electron flow around PSI, and state transitions. The protein is Cytochrome b6 of Nephroselmis olivacea (Green alga).